The sequence spans 243 residues: Triosephosphate isomerase (243 aa).

Position 9-11 (9-11 (NWK)) interacts with substrate. The Electrophile role is filled by H96. The active-site Proton acceptor is the E165. Residues G171, S204, and 225–226 (GG) each bind substrate.

Belongs to the triosephosphate isomerase family. Homodimer.

It localises to the cytoplasm. It carries out the reaction D-glyceraldehyde 3-phosphate = dihydroxyacetone phosphate. The protein operates within carbohydrate biosynthesis; gluconeogenesis. It participates in carbohydrate degradation; glycolysis; D-glyceraldehyde 3-phosphate from glycerone phosphate: step 1/1. Its function is as follows. Involved in the gluconeogenesis. Catalyzes stereospecifically the conversion of dihydroxyacetone phosphate (DHAP) to D-glyceraldehyde-3-phosphate (G3P). In Synechococcus sp. (strain CC9902), this protein is Triosephosphate isomerase.